The sequence spans 202 residues: Ribonuclease HII (202 aa).

Positions 13-202 (KIEAGLDEAG…HFKPKQLDLF (190 aa)) constitute an RNase H type-2 domain. Residues Asp-19, Glu-20, and Asp-112 each contribute to the a divalent metal cation site.

The protein belongs to the RNase HII family. Mn(2+) is required as a cofactor. The cofactor is Mg(2+).

The protein resides in the cytoplasm. It carries out the reaction Endonucleolytic cleavage to 5'-phosphomonoester.. Functionally, endonuclease that specifically degrades the RNA of RNA-DNA hybrids. The polypeptide is Ribonuclease HII (Cytophaga hutchinsonii (strain ATCC 33406 / DSM 1761 / CIP 103989 / NBRC 15051 / NCIMB 9469 / D465)).